We begin with the raw amino-acid sequence, 367 residues long: Anhydro-N-acetylmuramic acid kinase (367 aa).

Residue 10–17 participates in ATP binding; it reads GTSLDGVD.

The protein belongs to the anhydro-N-acetylmuramic acid kinase family.

The catalysed reaction is 1,6-anhydro-N-acetyl-beta-muramate + ATP + H2O = N-acetyl-D-muramate 6-phosphate + ADP + H(+). It participates in amino-sugar metabolism; 1,6-anhydro-N-acetylmuramate degradation. It functions in the pathway cell wall biogenesis; peptidoglycan recycling. Its function is as follows. Catalyzes the specific phosphorylation of 1,6-anhydro-N-acetylmuramic acid (anhMurNAc) with the simultaneous cleavage of the 1,6-anhydro ring, generating MurNAc-6-P. Is required for the utilization of anhMurNAc either imported from the medium or derived from its own cell wall murein, and thus plays a role in cell wall recycling. The sequence is that of Anhydro-N-acetylmuramic acid kinase from Aliivibrio fischeri (strain ATCC 700601 / ES114) (Vibrio fischeri).